Here is a 512-residue protein sequence, read N- to C-terminus: Neuronal acetylcholine receptor subunit alpha-3 (512 aa).

The first 23 residues, M1–S23, serve as a signal peptide directing secretion. Topologically, residues S24–I242 are extracellular. N47 and N164 each carry an N-linked (GlcNAc...) asparagine glycan. Intrachain disulfides connect C151-C165 and C215-C216. Residues P243–P258 traverse the membrane as a helical segment. Topologically, residues S259–D260 are cytoplasmic. A helical transmembrane segment spans residues C261 to V277. Residue E263 participates in Na(+) binding. Topologically, residues F278 to Y299 are extracellular. A helical transmembrane segment spans residues L300–L318. At N319 to V482 the chain is on the cytoplasmic side. The segment at E356–Q389 is disordered. Over residues G359–G376 the composition is skewed to gly residues. A helical membrane pass occupies residues I483–G501. Residues L502 to S512 are Extracellular-facing.

It belongs to the ligand-gated ion channel (TC 1.A.9) family. Acetylcholine receptor (TC 1.A.9.1) subfamily. Alpha-3/CHRNA3 sub-subfamily. In terms of assembly, neuronal AChR is composed of two different types of subunits: alpha and beta. CHRNA3/Alpha-3 subunit can be combined to CHRNB2/beta-2 or CHRNB4/beta-4 to give rise to functional receptors. Expressed in retina and brain.

It localises to the synaptic cell membrane. It is found in the cell membrane. The protein localises to the endoplasmic reticulum. Its subcellular location is the golgi apparatus. The enzyme catalyses K(+)(in) = K(+)(out). It carries out the reaction Na(+)(in) = Na(+)(out). The catalysed reaction is Ca(2+)(in) = Ca(2+)(out). Activated by a myriad of ligands such as acetylcholine, cytisine, nicotine, choline and epibatidine. The heteropentamer CHRNA3:CHRNB2 activity is blocked by alpha-conotoxins ImI, ImII, PnIA, GID and MII. The heteropentamer CHRNA3:CHRNB4 activity is blocked by the alpha-conotoxin ImI and AuIB. Functionally, component of neuronal acetylcholine receptors (nAChRs) that function as pentameric, ligand-gated cation channels with high calcium permeability among other activities. nAChRs are excitatory neurotrasnmitter receptors formed by a collection of nAChR subunits known to mediate synaptic transmission in the nervous system and the neuromuscular junction. Each nAchR subunit confers differential attributes to channel properties, including activation, deactivation and desensitization kinetics, pH sensitivity, cation permeability, and binding to allosteric modulators. CHRNA3 forms heteropentameric neuronal acetylcholine receptors with CHRNB2 and CHRNB4. CHRNA3:CHRNB4 being predominant in neurons of the autonomic ganglia, it is known as ganglionic nicotinic receptor. CHRNA3:CHRNB4 also plays an important role in the habenulo-interpeduncular tract, modulating the mesolimbic dopamine system and affecting reward circuits and addiction. Hypothalamic CHRNA3:CHRNB4 nAChR activation by nicotine leads to activation of POMC neurons and a decrease in food intake. Also expressed in the urothelium where it modulates reflex bladder activity by increasing intracellular calcium through extracellular influx and basal ATP release. The polypeptide is Neuronal acetylcholine receptor subunit alpha-3 (chrna3) (Carassius auratus (Goldfish)).